The sequence spans 466 residues: 3-isopropylmalate dehydratase large subunit (466 aa).

[4Fe-4S] cluster contacts are provided by Cys-347, Cys-407, and Cys-410.

Belongs to the aconitase/IPM isomerase family. LeuC type 1 subfamily. In terms of assembly, heterodimer of LeuC and LeuD. [4Fe-4S] cluster is required as a cofactor.

It carries out the reaction (2R,3S)-3-isopropylmalate = (2S)-2-isopropylmalate. It functions in the pathway amino-acid biosynthesis; L-leucine biosynthesis; L-leucine from 3-methyl-2-oxobutanoate: step 2/4. Catalyzes the isomerization between 2-isopropylmalate and 3-isopropylmalate, via the formation of 2-isopropylmaleate. The sequence is that of 3-isopropylmalate dehydratase large subunit from Shewanella piezotolerans (strain WP3 / JCM 13877).